The following is a 403-amino-acid chain: Dynactin subunit 2-A (403 aa).

Residues 1–26 (MADPKYADLPGIARNEPDVYETSDLP) are disordered. Positions 99-132 (PQQKYQRLLHEVQELTQEVEKTQSTVKESAAEEK) form a coiled coil. A disordered region spans residues 183–203 (AAKTRKNPEGKSPAKGPGPDT). Residues 381–401 (KENLATVEDNFSNIDGRIKKL) are a coiled coil.

Belongs to the dynactin subunit 2 family. Subunit of dynactin, a multiprotein complex part of a tripartite complex with dynein and a adapter, such as BICDL1, BICD2 or HOOK3. The dynactin complex is built around ACTR1A/ACTB filament and consists of an actin-related filament composed of a shoulder domain, a pointed end and a barbed end. Its length is defined by its flexible shoulder domain. The soulder is composed of 2 DCTN1 subunits, 4 DCTN2 and 2 DCTN3.

It is found in the cytoplasm. The protein localises to the cytoskeleton. The protein resides in the microtubule organizing center. It localises to the centrosome. Its subcellular location is the membrane. Part of the dynactin complex that activates the molecular motor dynein for ultra-processive transport along microtubules. In the dynactin soulder domain, binds the ACTR1A filament and acts as a molecular ruler to determine the length. Modulates cytoplasmic dynein binding to an organelle, and plays a role in prometaphase chromosome alignment and spindle organization during mitosis. Involved in anchoring microtubules to centrosomes. The polypeptide is Dynactin subunit 2-A (dctn2-a) (Xenopus laevis (African clawed frog)).